The chain runs to 274 residues: NADPH-dependent 7-cyano-7-deazaguanine reductase (274 aa).

Residue 80–82 (VES) participates in substrate binding. 82–83 (SK) is an NADPH binding site. The Thioimide intermediate role is filled by cysteine 181. Aspartate 188 serves as the catalytic Proton donor. 220–221 (HE) is a substrate binding site. 249–250 (RG) contributes to the NADPH binding site.

It belongs to the GTP cyclohydrolase I family. QueF type 2 subfamily. As to quaternary structure, homodimer.

It is found in the cytoplasm. It carries out the reaction 7-aminomethyl-7-carbaguanine + 2 NADP(+) = 7-cyano-7-deazaguanine + 2 NADPH + 3 H(+). It functions in the pathway tRNA modification; tRNA-queuosine biosynthesis. Its function is as follows. Catalyzes the NADPH-dependent reduction of 7-cyano-7-deazaguanine (preQ0) to 7-aminomethyl-7-deazaguanine (preQ1). In Paraburkholderia phymatum (strain DSM 17167 / CIP 108236 / LMG 21445 / STM815) (Burkholderia phymatum), this protein is NADPH-dependent 7-cyano-7-deazaguanine reductase.